A 672-amino-acid polypeptide reads, in one-letter code: COBRA-like protein 10 (672 aa).

An N-terminal signal peptide occupies residues 1-35 (MRAIDVKTGMKIPWDVRYSLSLFIFLSSILFLSNG). Residues asparagine 79, asparagine 135, asparagine 264, asparagine 328, asparagine 339, asparagine 368, asparagine 422, asparagine 442, asparagine 483, asparagine 562, asparagine 570, and asparagine 589 are each glycosylated (N-linked (GlcNAc...) asparagine). Residues 502 to 607 (KLPCPDNCGV…PVPGKQQSVI (106 aa)) enclose the CBM2 domain. Serine 646 is lipidated: GPI-anchor amidated serine. Positions 647 to 672 (SGHRRGISVSMSFVFATIAAFALMMD) are cleaved as a propeptide — removed in mature form. The Required for processing by the PIG complex, a critical step for apical plasma membrane localization in pollen tubes motif lies at 664–672 (IAAFALMMD).

The protein belongs to the COBRA family. Post-translationally, the GPI-anchor attachment at Ser-646 requires APTG1. In terms of tissue distribution, expressed in roots, stems, leaves, flowers and siliques. Specific expression in the pollen tube.

It is found in the cell membrane. The protein resides in the cytoplasm. Its subcellular location is the vesicle. In terms of biological role, involved in the deposition of apical pectin cap and cellulose microfibrils in pollen tubes. Not essential for pollen development, hydration or germination, but required for pollen tubes growth in the female transmitting tract of pistil and toward micropyles, via the perception of ovule guidance cues. This is COBRA-like protein 10 from Arabidopsis thaliana (Mouse-ear cress).